The following is a 145-amino-acid chain: MGCGGSRADAIEPRYYESWTRETESTWLTYTDSDAPPSAAAPDSGPEAGGLHSGMLEDGLPSNGVPRSTAPGGIPNPEKKTNCETQCPNPQSLSSGPLTQKQNGLQTTEAKRDAKRMPAKEVTINVTDSIQQMDRSRRITKNCVN.

Gly-2 is lipidated: N-myristoyl glycine. The S-palmitoyl cysteine moiety is linked to residue Cys-3. Residues 3-35 form an interaction with CAMK2A region; that stretch reads CGGSRADAIEPRYYESWTRETESTWLTYTDSDA. The tract at residues 27-119 is disordered; the sequence is WLTYTDSDAP…AKRDAKRMPA (93 aa). Residues 32 to 46 show a composition bias toward low complexity; sequence DSDAPPSAAAPDSGP. Positions 83–108 are enriched in polar residues; that stretch reads CETQCPNPQSLSSGPLTQKQNGLQTT. Residues 109-119 show a composition bias toward basic and acidic residues; that stretch reads EAKRDAKRMPA.

As to quaternary structure, interacts with CAMK2A. Post-translationally, palmitoylation and myristoylation target the protein to the lipid rafts. Predominantly expressed in neuroectoderm-derived tissues. Expressed in the brain and spinal cord, and at low levels, in the adrenal gland. In the bone marrow, confined to the CD34+ progenitor cells. Not found in peripheral blood mononuclear cells, nor lymph nodes. Tends to be expressed at high levels in acute myeloid leukemia and glioblastoma cells.

It localises to the cytoplasm. The protein localises to the synapse. Its subcellular location is the synaptosome. It is found in the membrane raft. The protein resides in the postsynaptic density. In terms of biological role, may play a synaptic role at the postsynaptic lipid rafts possibly through interaction with CAMK2A. This is Brain and acute leukemia cytoplasmic protein from Homo sapiens (Human).